The sequence spans 429 residues: Glutamate-1-semialdehyde 2,1-aminomutase 1 (429 aa).

Lysine 268 is subject to N6-(pyridoxal phosphate)lysine.

This sequence belongs to the class-III pyridoxal-phosphate-dependent aminotransferase family. HemL subfamily. In terms of assembly, homodimer. It depends on pyridoxal 5'-phosphate as a cofactor.

It is found in the cytoplasm. It carries out the reaction (S)-4-amino-5-oxopentanoate = 5-aminolevulinate. It participates in porphyrin-containing compound metabolism; protoporphyrin-IX biosynthesis; 5-aminolevulinate from L-glutamyl-tRNA(Glu): step 2/2. In Listeria innocua serovar 6a (strain ATCC BAA-680 / CLIP 11262), this protein is Glutamate-1-semialdehyde 2,1-aminomutase 1.